The chain runs to 80 residues: Exodeoxyribonuclease 7 small subunit (80 aa).

It belongs to the XseB family. As to quaternary structure, heterooligomer composed of large and small subunits.

The protein resides in the cytoplasm. The catalysed reaction is Exonucleolytic cleavage in either 5'- to 3'- or 3'- to 5'-direction to yield nucleoside 5'-phosphates.. In terms of biological role, bidirectionally degrades single-stranded DNA into large acid-insoluble oligonucleotides, which are then degraded further into small acid-soluble oligonucleotides. The protein is Exodeoxyribonuclease 7 small subunit of Rickettsia bellii (strain OSU 85-389).